The primary structure comprises 799 residues: MSTIYRESDSLESEPSPTPTTIPIQINMEEEKKDAFVKNIDEDVNNLTATTDEEDRDPESQKFDRHSIQEEGLVWKGDPTYLPNSPYPEVRSAVSIEDDPTIRLNHWRTWFLTTVFVVVFAGVNQFFSLRYPSLEINFLVAQVVCYPIGRILALLPDWKCSKVPFFDLNPGPFTKKEHAVVTIAVALTSSTAYAMYILNAQGSFYNMKLNVGYQFLLVWTSQMIGYGAAGLTRRWVVNPASSIWPQTLISVSLFDSLHSRKVEKTVANGWTMPRYRFFLIVLIGSFIWYWVPGFLFTGLSYFNVILWGSKTRHNFIANTIFGTQSGLGALPITFDYTQVSQAMSGSVFATPFYVSANTYASVLIFFVIVLPCLYFTNTWYAKYMPVISGSTYDNTQNKYNVTKILNEDYSINLEKYKEYSPVFVPFSYLLSYALNFAAVIAVFVHCILYHGKDIVAKFKDRKNGGTDIHMRIYSKNYKDCPDWWYLLLQIVMIGLGFVAVCCFDTKFPAWAFVIAILISLVNFIPQGILEAMTNQHVGLNIITELICGYMLPLRPMANLLFKLYGFIVMRQGLNLSRDLKLAMYMKVSPRLIFAVQIYATIISGMVNVGVQEWMMHNIDGLCTTDQPNGFTCANGRTVFNASIIWSLPKYLFSSGRIYNPLMWFFLIGLLFPLAVYAVQWKFPKFKFAKHIHTPVFFTGPGNIPPSTPYNYSLFFAMSFCLNLIRKRWRAWFNKYNFVMGAGVEAGVAISVVIIFLCVQYPGGKLSWWGNNVWKRTYDNDYKKFYTLKKGETFGYDKWW.

Disordered stretches follow at residues 1–26 and 43–64; these read MSTI…PIQI and DVNN…QKFD. Residues 1-108 are Extracellular-facing; sequence MSTIYRESDS…DPTIRLNHWR (108 aa). Residues 13–26 show a composition bias toward low complexity; it reads SEPSPTPTTIPIQI. Residue Asn46 is glycosylated (N-linked (GlcNAc...) asparagine). Phosphothreonine is present on residues Thr48, Thr50, and Thr51. The helical transmembrane segment at 109–129 threads the bilayer; sequence TWFLTTVFVVVFAGVNQFFSL. Over 130–135 the chain is Cytoplasmic; the sequence is RYPSLE. Residues 136 to 156 form a helical membrane-spanning segment; that stretch reads INFLVAQVVCYPIGRILALLP. Topologically, residues 157-177 are extracellular; sequence DWKCSKVPFFDLNPGPFTKKE. A helical membrane pass occupies residues 178-198; sequence HAVVTIAVALTSSTAYAMYIL. At 199–210 the chain is on the cytoplasmic side; that stretch reads NAQGSFYNMKLN. Residues 211–231 form a helical membrane-spanning segment; that stretch reads VGYQFLLVWTSQMIGYGAAGL. Residues 232-276 lie on the Extracellular side of the membrane; that stretch reads TRRWVVNPASSIWPQTLISVSLFDSLHSRKVEKTVANGWTMPRYR. Residues 277-297 traverse the membrane as a helical segment; sequence FFLIVLIGSFIWYWVPGFLFT. At 298–313 the chain is on the cytoplasmic side; sequence GLSYFNVILWGSKTRH. A helical membrane pass occupies residues 314-334; the sequence is NFIANTIFGTQSGLGALPITF. The Extracellular segment spans residues 335 to 359; that stretch reads DYTQVSQAMSGSVFATPFYVSANTY. The helical transmembrane segment at 360–380 threads the bilayer; that stretch reads ASVLIFFVIVLPCLYFTNTWY. The Cytoplasmic portion of the chain corresponds to 381-428; it reads AKYMPVISGSTYDNTQNKYNVTKILNEDYSINLEKYKEYSPVFVPFSY. A helical membrane pass occupies residues 429–449; it reads LLSYALNFAAVIAVFVHCILY. Topologically, residues 450–482 are extracellular; it reads HGKDIVAKFKDRKNGGTDIHMRIYSKNYKDCPD. Residues 483–503 traverse the membrane as a helical segment; sequence WWYLLLQIVMIGLGFVAVCCF. Topologically, residues 504–508 are cytoplasmic; that stretch reads DTKFP. A helical transmembrane segment spans residues 509–529; the sequence is AWAFVIAILISLVNFIPQGIL. Residues 530–540 are Extracellular-facing; that stretch reads EAMTNQHVGLN. Residues 541–561 form a helical membrane-spanning segment; the sequence is IITELICGYMLPLRPMANLLF. Topologically, residues 562–590 are cytoplasmic; it reads KLYGFIVMRQGLNLSRDLKLAMYMKVSPR. The chain crosses the membrane as a helical span at residues 591–611; sequence LIFAVQIYATIISGMVNVGVQ. The Extracellular portion of the chain corresponds to 612–659; sequence EWMMHNIDGLCTTDQPNGFTCANGRTVFNASIIWSLPKYLFSSGRIYN. N-linked (GlcNAc...) asparagine glycosylation occurs at Asn640. Residues 660–680 form a helical membrane-spanning segment; sequence PLMWFFLIGLLFPLAVYAVQW. Residues 681–736 lie on the Cytoplasmic side of the membrane; that stretch reads KFPKFKFAKHIHTPVFFTGPGNIPPSTPYNYSLFFAMSFCLNLIRKRWRAWFNKYN. Residues 737–757 traverse the membrane as a helical segment; sequence FVMGAGVEAGVAISVVIIFLC. Topologically, residues 758-799 are extracellular; that stretch reads VQYPGGKLSWWGNNVWKRTYDNDYKKFYTLKKGETFGYDKWW.

It belongs to the oligopeptide OPT transporter family.

The protein resides in the cell membrane. In terms of biological role, high affinity transporter for glutathione. Also transports tetra- and pentapeptides like the opioids leucine enkephalin (Tyr-Gly-Gly-Phe-Leu) and methionine enkephalin (Tyr-Gly-Gly_Phe-Met) across the cell membrane. This Saccharomyces cerevisiae (strain ATCC 204508 / S288c) (Baker's yeast) protein is Oligopeptide transporter 1 (OPT1).